The chain runs to 118 residues: Large ribosomal subunit protein bL20 (118 aa).

This sequence belongs to the bacterial ribosomal protein bL20 family.

Binds directly to 23S ribosomal RNA and is necessary for the in vitro assembly process of the 50S ribosomal subunit. It is not involved in the protein synthesizing functions of that subunit. The polypeptide is Large ribosomal subunit protein bL20 (Desulfovibrio desulfuricans (strain ATCC 27774 / DSM 6949 / MB)).